The sequence spans 222 residues: Physcion biosynthesis cluster O-methyltransferase (222 aa).

It belongs to the methyltransferase superfamily.

The catalysed reaction is emodin + S-adenosyl-L-methionine = physcion + S-adenosyl-L-homocysteine. It participates in secondary metabolite biosynthesis. Functionally, O-methyltransferase; part of the gene cluster that mediates the biosynthesis of physcion, a natural anthraquinone fungicide that can prevent plant fungal infections. Within the pathway, the O-methyltransferase AcOMT catalyzes the last step by transferring a methyl group to C-6 hydroxyl of emodin to form physcion. AcOMT may also methylate the C-6 hydroxyl group of emodin anthrone to produce physcion-anthrone B. The pathway begins with the polyketide synthase AcPKS that condenses 8 malonyl-CoA units to synthesize atrochrysone thioester which is released from the synthase by the atrochrysone carboxyl ACP thioesterase AcTE that breaks the thioester bond and leads to free atrochrysone carboxylic acid. Spontaneous decarboxylation of atrochrysone carboxylic acid leads to the formation of atrochrysone. Then, atrochrysone undergoes spontaneous dehydration and oxidation, giving the products emodin anthrone and emodin. The O-methyltransferase AcOMT then methylates the C-6 hydroxyl of emodin to form physcion. The chain is Physcion biosynthesis cluster O-methyltransferase from Aspergillus chevalieri (Eurotium chevalieri).